We begin with the raw amino-acid sequence, 821 residues long: Phenylalanine--tRNA ligase beta subunit (821 aa).

The 111-residue stretch at Arg39 to Arg149 folds into the tRNA-binding domain. One can recognise a B5 domain in the interval Pro409–Glu503. Positions 481, 487, 490, and 491 each coordinate Mg(2+). The 97-residue stretch at Ser724–Arg820 folds into the FDX-ACB domain.

The protein belongs to the phenylalanyl-tRNA synthetase beta subunit family. Type 1 subfamily. As to quaternary structure, tetramer of two alpha and two beta subunits. The cofactor is Mg(2+).

Its subcellular location is the cytoplasm. It carries out the reaction tRNA(Phe) + L-phenylalanine + ATP = L-phenylalanyl-tRNA(Phe) + AMP + diphosphate + H(+). The protein is Phenylalanine--tRNA ligase beta subunit of Thermosynechococcus vestitus (strain NIES-2133 / IAM M-273 / BP-1).